Here is a 218-residue protein sequence, read N- to C-terminus: NADH dehydrogenase [ubiquinone] iron-sulfur protein 7, mitochondrial (218 aa).

Residues L34–R48 are compositionally biased toward low complexity. The segment at L34 to L61 is disordered. The span at P49–G60 shows a compositional bias: pro residues. 4 residues coordinate [4Fe-4S] cluster: C93, C94, C158, and C188.

Belongs to the complex I 20 kDa subunit family. As to quaternary structure, complex I is composed of at least 49 different subunits. This is a component of the iron-sulfur (IP) fragment of the enzyme. [4Fe-4S] cluster is required as a cofactor.

The protein resides in the mitochondrion. The enzyme catalyses a ubiquinone + NADH + 5 H(+)(in) = a ubiquinol + NAD(+) + 4 H(+)(out). In terms of biological role, core subunit of the mitochondrial membrane respiratory chain NADH dehydrogenase (Complex I) that is believed to belong to the minimal assembly required for catalysis. Complex I functions in the transfer of electrons from NADH to the respiratory chain. The immediate electron acceptor for the enzyme is believed to be ubiquinone. This Arabidopsis thaliana (Mouse-ear cress) protein is NADH dehydrogenase [ubiquinone] iron-sulfur protein 7, mitochondrial.